The primary structure comprises 208 residues: Large ribosomal subunit protein uL4 (208 aa).

The segment at R44–G76 is disordered. The segment covering G60–G76 has biased composition (basic residues).

The protein belongs to the universal ribosomal protein uL4 family. In terms of assembly, part of the 50S ribosomal subunit.

Functionally, one of the primary rRNA binding proteins, this protein initially binds near the 5'-end of the 23S rRNA. It is important during the early stages of 50S assembly. It makes multiple contacts with different domains of the 23S rRNA in the assembled 50S subunit and ribosome. Its function is as follows. Forms part of the polypeptide exit tunnel. The chain is Large ribosomal subunit protein uL4 from Acetivibrio thermocellus (strain ATCC 27405 / DSM 1237 / JCM 9322 / NBRC 103400 / NCIMB 10682 / NRRL B-4536 / VPI 7372) (Clostridium thermocellum).